Consider the following 550-residue polypeptide: Calcium-dependent protein kinase 20 (550 aa).

The tract at residues 1–58 (MGNCCVTPEGSGRGRKKQQQEQKQKQKEPKQQQQQQKKGKKPNPFSIEYNRSSAPSGH) is disordered. The N-myristoyl glycine moiety is linked to residue G2. The segment covering 18–30 (QQQEQKQKQKEPK) has biased composition (basic and acidic residues). One can recognise a Protein kinase domain in the interval 75–333 (YELGGELGRG…AQQVLDHPWL (259 aa)). ATP contacts are provided by residues 81–89 (LGRGEFGVT) and K104. D199 acts as the Proton acceptor in catalysis. Residues 339-369 (APNVNLGETVKARLQQFSVMNKFKKHALRVI) form an autoinhibitory domain region. 4 EF-hand domains span residues 376 to 411 (EEVA…LGHQ), 412 to 447 (MADA…LRKI), 448 to 483 (GNDE…DLGA), and 484 to 519 (NHEE…GTDW). Residues D389, N391, D393, M395, E400, D425, D427, N429, S431, E436, D461, N463, S465, Y467, E472, D497, D499, D501, K503, and E508 each contribute to the Ca(2+) site.

The protein belongs to the protein kinase superfamily. Ser/Thr protein kinase family. CDPK subfamily. Expressed in roots and leaf blades.

Its subcellular location is the membrane. The catalysed reaction is L-seryl-[protein] + ATP = O-phospho-L-seryl-[protein] + ADP + H(+). It carries out the reaction L-threonyl-[protein] + ATP = O-phospho-L-threonyl-[protein] + ADP + H(+). Activated by calcium. Autophosphorylation may play an important role in the regulation of the kinase activity. Functionally, may play a role in signal transduction pathways that involve calcium as a second messenger. The polypeptide is Calcium-dependent protein kinase 20 (Oryza sativa subsp. japonica (Rice)).